A 1822-amino-acid chain; its full sequence is Signal-induced proliferation-associated 1-like protein 1 (1822 aa).

Disordered regions lie at residues 1–30 and 47–125; these read MTSL…PKVH and GSSV…VSLN. Over residues 84–94 the composition is skewed to basic and acidic residues; that stretch reads PPRKENVKESS. Residues 95 to 125 are compositionally biased toward low complexity; that stretch reads RSSQEIETSSCLESLSSKGSPVSQGSSVSLN. Phosphoserine occurs at positions 162, 187, 193, 208, 255, and 288. The segment at 277–297 is disordered; it reads EREKPLKRRSKSETGDSSIFR. Residues 638–855 enclose the Rap-GAP domain; sequence FMKLDEQGLN…RTRQEYLKDL (218 aa). A PDZ domain is found at 992 to 1068; sequence EMTLRRNGLG…VKVVIIPPHD (77 aa). Ser1117, Ser1126, Ser1155, Ser1166, Ser1188, Ser1209, and Ser1220 each carry phosphoserine. The disordered stretch occupies residues 1134-1165; it reads AGKGDGKMPLPERAANIPRSISSDGRPLERRL. The tract at residues 1183–1252 is disordered; it reads SQCRNSPSNL…WQRSEDSLAD (70 aa). A compositionally biased stretch (low complexity) spans 1188-1198; it reads SPSNLSSSSET. The segment covering 1225 to 1244 has biased composition (polar residues); that stretch reads DRQNTQSDIGGSGKSTPSWQ. Phosphoserine is present on residues Ser1273 and Ser1288. Residues 1286–1324 form a disordered region; the sequence is HLSPNKQGHSDSHYSSHSSSNTLSSNASSAHSDEKWYDG. Residues 1300–1315 are compositionally biased toward low complexity; sequence SSHSSSNTLSSNASSA. Phosphoserine; by PLK2 is present on Ser1344. Thr1348 carries the phosphothreonine; by PLK2 modification. A compositionally biased stretch (low complexity) spans 1358 to 1367; that stretch reads TASLGASTSS. Residues 1358 to 1382 are disordered; sequence TASLGASTSSPRSGPGKEKVAPLWH. Ser1367 carries the post-translational modification Phosphoserine; by CDK5. Position 1384 is a phosphoserine (Ser1384). Residues 1395-1407 are compositionally biased toward basic and acidic residues; sequence LETEGHGMDRKTE. The tract at residues 1395–1493 is disordered; sequence LETEGHGMDR…SSSGPRTFYP (99 aa). Phosphoserine is present on residues Ser1408, Ser1409, Ser1430, Ser1449, and Ser1451. A compositionally biased stretch (polar residues) spans 1417–1436; sequence KSQGGSSPLTRENSTFSIND. Low complexity-rich tracts occupy residues 1437–1451 and 1471–1486; these read ATSH…HSAS and SSQL…SSSS. Phosphoserine is present on residues Ser1546 and Ser1567. The segment at 1567-1595 is disordered; the sequence is SPTPESQKNFKFHGLSSPQSPFPSTPTSR. The residue at position 1569 (Thr1569) is a Phosphothreonine. Phosphoserine occurs at positions 1572, 1583, 1586, 1603, and 1606. Arg1619 is subject to Asymmetric dimethylarginine. Ser1621, Ser1665, Ser1668, Ser1726, Ser1729, Ser1746, Ser1747, and Ser1752 each carry phosphoserine. Residues 1753-1813 adopt a coiled-coil conformation; that stretch reads PTLASKVDQL…ASDKLKKFTE (61 aa).

In terms of assembly, interacts (via PDZ domain) with EPHA4 (via PDZ motif); controls neuronal morphology through regulation of the RAP1 (RAP1A or RAP1B) and RAP2 (RAP2A, RAP2B or RAP2C) GTPases. Interacts with DLG4, PDLIM5, PDLIM7 and LZTS3. Interacts with the actin cytoskeleton. Ubiquitinated and degraded by the SCF(BTRC) following phosphorylation by PLK2. In terms of processing, phosphorylated at Ser-1367 by CDK5, creating a docking site for the POLO box domains of PLK2. Subsequently, PLK2 binds and phosphorylates SIPA1L1, leading to ubiquitination and degradation by the proteasome. As to expression, detected in brain (at protein level).

The protein localises to the cytoplasm. It is found in the cytoskeleton. Its subcellular location is the postsynaptic density. The protein resides in the synapse. It localises to the synaptosome. Functionally, stimulates the GTPase activity of RAP2A. Promotes reorganization of the actin cytoskeleton and recruits DLG4 to F-actin. Contributes to the regulation of dendritic spine morphogenesis. In Rattus norvegicus (Rat), this protein is Signal-induced proliferation-associated 1-like protein 1 (Sipa1l1).